A 206-amino-acid chain; its full sequence is MDLKLIELASGKEAGSVKVSEAIFGAEFNEALVHQVVNAYLAGARSGTKGQKNRSAVRGGGAKPWAQKGSGRARAGTSRGPIWIGGGRAFPGHNRDFSQKVNKKMYRGAMKAIFSELARTERLVVVDDFKVEAPKTKDFVAKLNTLNLKDALVITEGFDEYLYLSARNLYHADVCDVASIDPVSLVGFKSIVVTQGAIKQLEEKLA.

The tract at residues 47–79 is disordered; that stretch reads GTKGQKNRSAVRGGGAKPWAQKGSGRARAGTSR. Residues 69–79 show a composition bias toward low complexity; sequence GSGRARAGTSR.

This sequence belongs to the universal ribosomal protein uL4 family. Part of the 50S ribosomal subunit.

One of the primary rRNA binding proteins, this protein initially binds near the 5'-end of the 23S rRNA. It is important during the early stages of 50S assembly. It makes multiple contacts with different domains of the 23S rRNA in the assembled 50S subunit and ribosome. Functionally, forms part of the polypeptide exit tunnel. The protein is Large ribosomal subunit protein uL4 of Hydrogenovibrio crunogenus (strain DSM 25203 / XCL-2) (Thiomicrospira crunogena).